Reading from the N-terminus, the 31-residue chain is Ranatuerin-2 (31 aa).

Cys23 and Cys28 are joined by a disulfide.

The protein belongs to the frog skin active peptide (FSAP) family. Ranatuerin subfamily. As to expression, expressed by the skin glands.

It localises to the secreted. In terms of biological role, antibacterial activity against Gram-positive bacterium S.aureus (MIC=60 uM). Shows no detectable hemolytic activity towards human erythrocytes. The sequence is that of Ranatuerin-2 from Aquarana catesbeiana (American bullfrog).